A 67-amino-acid polypeptide reads, in one-letter code: Alpha-conotoxin-like Qc1.1a (67 aa).

The signal sequence occupies residues 1-21 (MGMRMMFTMFLLVVLAITVVS). A propeptide spanning residues 22-46 (FTSDHASDGRNTAANDKASNLMALR) is cleaved from the precursor. Intrachain disulfides connect Cys-49/Cys-55 and Cys-50/Cys-63. Residues 51–53 (PDP) are lacks the Ser-Xaa-Pro motif that is crucial for potent interaction with nAChR.

It belongs to the conotoxin A superfamily. Expressed by the venom duct.

It localises to the secreted. Its function is as follows. Alpha-conotoxins act on postsynaptic membranes, they bind to the nicotinic acetylcholine receptors (nAChR) and thus inhibit them. Has possibly a distinct nAChR binding mode from other alpha-conotoxins, due to a different three residue motif (lacks the Ser-Xaa-Pro motif). This Conus quercinus (Oak cone) protein is Alpha-conotoxin-like Qc1.1a.